A 394-amino-acid polypeptide reads, in one-letter code: Methylthioribose kinase (394 aa).

ATP is bound by residues asparagine 44, lysine 61, and 115-117 (EDL). Aspartate 233 serves as a coordination point for substrate. 250–252 (DPE) contributes to the ATP binding site. Arginine 337 contributes to the substrate binding site.

The protein belongs to the methylthioribose kinase family. In terms of assembly, homodimer.

The catalysed reaction is 5-(methylsulfanyl)-D-ribose + ATP = 5-(methylsulfanyl)-alpha-D-ribose 1-phosphate + ADP + H(+). The protein operates within amino-acid biosynthesis; L-methionine biosynthesis via salvage pathway; S-methyl-5-thio-alpha-D-ribose 1-phosphate from S-methyl-5'-thioadenosine (hydrolase route): step 2/2. Catalyzes the phosphorylation of methylthioribose into methylthioribose-1-phosphate. This chain is Methylthioribose kinase, found in Bacillus velezensis (strain DSM 23117 / BGSC 10A6 / LMG 26770 / FZB42) (Bacillus amyloliquefaciens subsp. plantarum).